Consider the following 287-residue polypeptide: Succinate dehydrogenase [ubiquinone] iron-sulfur subunit, mitochondrial (287 aa).

The transit peptide at 1–23 (MISNVLKRASVLARSNGIQSAFY) directs the protein to the mitochondrion. Residues 51–140 (FQVYRYNEET…GDTVKVYPLP (90 aa)) form the 2Fe-2S ferredoxin-type domain. Positions 101, 106, 109, and 121 each coordinate [2Fe-2S] cluster. The 31-residue stretch at 186–216 (NRHKLDGLYECILCACCSTSCPSYWWSEGGD) folds into the 4Fe-4S ferredoxin-type domain. Cys-196, Cys-199, and Cys-202 together coordinate [4Fe-4S] cluster. Position 206 (Cys-206) interacts with [3Fe-4S] cluster. Residue Trp-211 participates in a ubiquinone binding. Residues Cys-257 and Cys-263 each coordinate [3Fe-4S] cluster. Position 267 (Cys-267) interacts with [4Fe-4S] cluster.

It belongs to the succinate dehydrogenase/fumarate reductase iron-sulfur protein family. In terms of assembly, component of complex II composed of four subunits: the flavoprotein (FP) SDHA, iron-sulfur protein (IP) SDHB, and a cytochrome b composed of a large and a small subunit. The cofactor is [2Fe-2S] cluster. It depends on [3Fe-4S] cluster as a cofactor. [4Fe-4S] cluster serves as cofactor.

The protein resides in the mitochondrion inner membrane. The catalysed reaction is a quinone + succinate = fumarate + a quinol. It functions in the pathway carbohydrate metabolism; tricarboxylic acid cycle; fumarate from succinate (eukaryal route): step 1/1. Functionally, iron-sulfur protein (IP) subunit of succinate dehydrogenase (SDH) that is involved in complex II of the mitochondrial electron transport chain and is responsible for transferring electrons from succinate to ubiquinone (coenzyme Q). This Dictyostelium discoideum (Social amoeba) protein is Succinate dehydrogenase [ubiquinone] iron-sulfur subunit, mitochondrial (sdhB).